Consider the following 91-residue polypeptide: Small ribosomal subunit protein uS19 (91 aa).

The protein belongs to the universal ribosomal protein uS19 family.

Its function is as follows. Protein S19 forms a complex with S13 that binds strongly to the 16S ribosomal RNA. This is Small ribosomal subunit protein uS19 from Saccharophagus degradans (strain 2-40 / ATCC 43961 / DSM 17024).